Reading from the N-terminus, the 61-residue chain is Sperm protamine P1 (61 aa).

The interval 1–61 (MARYRHSRSR…RYSRRRRRRY (61 aa)) is disordered.

Belongs to the protamine P1 family. In terms of tissue distribution, testis.

Its subcellular location is the nucleus. It localises to the chromosome. Its function is as follows. Protamines substitute for histones in the chromatin of sperm during the haploid phase of spermatogenesis. They compact sperm DNA into a highly condensed, stable and inactive complex. This Onychogalea fraenata (Bridled nail-tailed wallaby) protein is Sperm protamine P1 (PRM1).